Reading from the N-terminus, the 137-residue chain is Major seminal plasma glycoprotein PSP-II (137 aa).

The signal sequence occupies residues methionine 1–threonine 21. 2 disulfide bridges follow: cysteine 30–cysteine 51 and cysteine 74–cysteine 95. One can recognise a CUB domain in the interval cysteine 30–serine 131. Asparagine 119 is a glycosylation site (N-linked (GlcNAc...) (complex) asparagine).

As to quaternary structure, monomer or heterodimer with PSP-I (depending on the type of glycosylation of PSP-I). As to expression, seminal plasma or sperm.

It localises to the secreted. This chain is Major seminal plasma glycoprotein PSP-II, found in Sus scrofa (Pig).